The primary structure comprises 708 residues: RUN and FYVE domain-containing protein 1 (708 aa).

The segment covering 1–17 (MADREGGCAAGRGRELE) has biased composition (basic and acidic residues). The segment at 1 to 57 (MADREGGCAAGRGRELEPELEPGPGPGSALEPGEEFEIVDRSQLPGPGDLRSATRPR) is disordered. Residues 139–271 (DADHAPLQQF…LDANLCLKGE (133 aa)) enclose the RUN domain. Residues 321-374 (TVGDLQTKIDGLEKTNSKLQEELSAATDRICSLQEEQQQLREQNELIRERSEKS) are a coiled coil. Phosphotyrosine occurs at positions 389 and 400. Positions 405–617 (KQLKEEKKVR…QALQEMGLHL (213 aa)) form a coiled coil. A disordered region spans residues 493–522 (QVMSSMKQMEERLQHSERARQGAEERSHKL). Over residues 500-522 (QMEERLQHSERARQGAEERSHKL) the composition is skewed to basic and acidic residues. Residues 615-625 (LHLSQSKLKME) form an interaction with RAB4 region. Ser620 is modified (phosphoserine). Residues 642–700 (DDEATHCRQCEKEFSISRRKHHCRNCGHIFCNTCSSNELALPSYPKPVRVCDSCHTLLL) form an FYVE-type zinc finger. Residues Cys648, Cys651, Cys664, Cys667, Cys672, Cys675, Cys692, and Cys695 each coordinate Zn(2+).

In terms of assembly, self-assembles through coiled coil domains to drive ELVA (endo-lysosomal vesicular assembly) formation. Interacts with BMX. May interact with SSB. Interacts with RAB4 and RAB5 that have been activated by GTP-binding. Interacts WITH RAB14 and RAB4B (GTP-bound form); the interactions allow endosomal tethering and fusion. Interacts with ARL8B (GTP-bound form); the interaction is required for RUFY1 endosomal location and promotes interaction with RAB14. Post-translationally, phosphorylation on Tyr-389 and/or Tyr-400 is required for interaction with BMX and endosomal targeting. As to expression, broadly expressed, with highest levels in lung, testis, kidney and brain.

Its subcellular location is the early endosome membrane. Activating adapter involved in cargo sorting from early/recycling endosomes. Regulates retrieval of proteins from endosomes to the trans-Golgi network through interaction with the dynein-dynactin complex. Dual effector of RAB4B and RAB14, mediates a cooperative interaction allowing endosomal tethering and fusion. Binds phospholipid vesicles containing phosphatidylinositol 3-phosphate and participates in early endosomal trafficking. In oocytes, self-assembles to form a protein matrix which hold together endolysosomes, autophagosomes and proteasomes and generate non-membrane-bound compartments called endo-lysosomal vesicular assemblies (ELVAs). In immature oocytes, ELVAs sequester ubiquitinated protein aggregates and degrade them upon oocyte maturation. The sequence is that of RUN and FYVE domain-containing protein 1 from Homo sapiens (Human).